Reading from the N-terminus, the 225-residue chain is Urease accessory protein UreE (225 aa).

The span at 171–215 shows a compositional bias: basic and acidic residues; sequence HHGHEHSHDHEHGHSHAAHEHSHGHDHTHGHDHDHGDHVHDESCG. The disordered stretch occupies residues 171-225; it reads HHGHEHSHDHEHGHSHAAHEHSHGHDHTHGHDHDHGDHVHDESCGHGHHHHHAHR. A compositionally biased stretch (basic residues) spans 216 to 225; the sequence is HGHHHHHAHR.

The protein belongs to the UreE family.

Its subcellular location is the cytoplasm. Its function is as follows. Involved in urease metallocenter assembly. Binds nickel. Probably functions as a nickel donor during metallocenter assembly. This chain is Urease accessory protein UreE, found in Paraburkholderia xenovorans (strain LB400).